A 1361-amino-acid chain; its full sequence is Zinc finger protein GLI4 (1361 aa).

The segment at 185–270 (SSFGHTPLLH…PQPPDHLTDL (86 aa)) is disordered. Polar residues-rich tracts occupy residues 198–208 (TFASRQQGALT) and 227–241 (NKVS…TVNQ). 5 consecutive C2H2-type zinc fingers follow at residues 289-314 (TNCH…NNDH), 322-349 (FVCR…MRRH), 355-379 (HKCT…LRSH), 385-410 (YVCD…NRTH), and 416-441 (YICK…KTVH). Disordered regions lie at residues 434-527 (RKHV…TNNI), 556-584 (STVS…GTAE), 647-720 (NERR…LPNL), 787-832 (NAGL…SMNS), 906-946 (QNRE…APGA), and 1134-1230 (DGLH…PKDN). Over residues 475–502 (SGREHSDSVSRDQEHCLQTRTIKTEDNM) the composition is skewed to basic and acidic residues. Over residues 506–522 (SSPGGQSSCSSEPSPYG) the composition is skewed to low complexity. Over residues 573–584 (QRIHSAETGTAE) the composition is skewed to basic and acidic residues. Over residues 653-670 (TSSTLSSAYTSRRSSGIS) the composition is skewed to low complexity. Composition is skewed to polar residues over residues 672–695 (YFSS…SSAD) and 710–720 (EASQHSGLPNL). Basic and acidic residues predominate over residues 805–821 (RASDPVRRTAGIDDKPL). Composition is skewed to polar residues over residues 913–939 (QNLQ…NTPE) and 1142–1164 (YTVQ…SGQA). The span at 1172–1183 (PRPPAAPHPPNR) shows a compositional bias: pro residues.

The protein belongs to the GLI C2H2-type zinc-finger protein family.

The protein localises to the nucleus. Has an essential role in the early embryonic patterning of mesoderm and neuroectoderm. This chain is Zinc finger protein GLI4 (gli4), found in Xenopus laevis (African clawed frog).